A 101-amino-acid chain; its full sequence is MRGYRSSQRTFFRGFDPRHAYRFRGDGRHGGMGGALKIVFLGMMTYFIAKKAFRSSQHPPTDFNAPVQSVPQRAQRPSDTRLQGPVLLASNHPSGDSASPE.

A helical transmembrane segment spans residues 30 to 49; sequence GGMGGALKIVFLGMMTYFIA. A disordered region spans residues 56–101; the sequence is SQHPPTDFNAPVQSVPQRAQRPSDTRLQGPVLLASNHPSGDSASPE. 2 stretches are compositionally biased toward polar residues: residues 66-81 and 91-101; these read PVQS…SDTR and NHPSGDSASPE.

It localises to the membrane. Functionally, part of the gene cluster that mediates the biosynthesis of oxopyrrolidines, polyketide-amino acid hybrid compounds with feature structures of tetramic acid. Does not seem to play a role in oxopyrrolidines A and B biosynthesis. This chain is opdI, found in Penicillium oxalicum (strain 114-2 / CGMCC 5302) (Penicillium decumbens).